Here is a 368-residue protein sequence, read N- to C-terminus: Alanine racemase (368 aa).

The active-site Proton acceptor; specific for D-alanine is K35. At K35 the chain carries N6-(pyridoxal phosphate)lysine. R130 lines the substrate pocket. Y253 (proton acceptor; specific for L-alanine) is an active-site residue. Residue M305 participates in substrate binding.

The protein belongs to the alanine racemase family. The cofactor is pyridoxal 5'-phosphate.

It carries out the reaction L-alanine = D-alanine. The protein operates within amino-acid biosynthesis; D-alanine biosynthesis; D-alanine from L-alanine: step 1/1. Catalyzes the interconversion of L-alanine and D-alanine. May also act on other amino acids. The sequence is that of Alanine racemase (alr) from Cupriavidus metallidurans (strain ATCC 43123 / DSM 2839 / NBRC 102507 / CH34) (Ralstonia metallidurans).